Consider the following 90-residue polypeptide: Large ribosomal subunit protein bL27 (90 aa).

The interval 1–21 (MASKKAGGSTRNGRDSEAKRL) is disordered.

It belongs to the bacterial ribosomal protein bL27 family.

This Neisseria meningitidis serogroup C (strain 053442) protein is Large ribosomal subunit protein bL27.